Here is a 397-residue protein sequence, read N- to C-terminus: MTKSQDIIEITNHYGAPNYHPLPIVISEAEGVWVKDPEGNKYMDMLSAYSAVNQGHRHPKIIQALKEQADRVTLTSRAFHSDQLGPWYEKICKLAGKEMVLPMNTGAEAVETAIKAARRWAYDVKGVAKDQAEIIAMKGNFHGRTLAAVSLSSEAEYQRGYGPLLGGFKLVEFGDIEQIKSAITPNTAAVLLEPIQGEAGINIPEDGFLKQVRDVCTENNVLFIADEIQAGLGRSGKMFATDWDNVVPDMYILGKALGGGVFPISCVLADKEILEVFNAGSHGSTFGGNPLACAVSNAALDVLVDEKLAERSLELGEYFQSKLKEIDNPVIKEVRGKGLFIGVELNEAARPYCEQLKELGLLCKETHDTVIRFAPPLIISQEDLDWAIDKVKQVFSK.

Lysine 255 is modified (N6-(pyridoxal phosphate)lysine).

It belongs to the class-III pyridoxal-phosphate-dependent aminotransferase family. OAT subfamily. Requires pyridoxal 5'-phosphate as cofactor.

The protein resides in the cytoplasm. The catalysed reaction is a 2-oxocarboxylate + L-ornithine = L-glutamate 5-semialdehyde + an L-alpha-amino acid. Its pathway is amino-acid biosynthesis; L-proline biosynthesis; L-glutamate 5-semialdehyde from L-ornithine: step 1/1. Functionally, catalyzes the interconversion of ornithine to glutamate semialdehyde. This chain is Ornithine aminotransferase, found in Macrococcus caseolyticus (strain JCSC5402) (Macrococcoides caseolyticum).